The primary structure comprises 153 residues: MADQQNIRAFQKQLGINLNRKNVSRKKGLRMHHSIGLGFKTPKEAITGTYIDKKCPFTGHISIRGRILTGVVRKMKMHRTIVIRRDYLHFIRKYDRFEKRHRNMSVHLSPCFRDVEAGDIVTVGECRPLSKTVRFNVLKVSKMAGSKKKFSKF.

It belongs to the universal ribosomal protein uS17 family.

The polypeptide is Small ribosomal subunit protein uS17 (RpS11) (Anopheles gambiae (African malaria mosquito)).